A 112-amino-acid chain; its full sequence is Small ribosomal subunit protein bS6 (112 aa).

It belongs to the bacterial ribosomal protein bS6 family.

Binds together with bS18 to 16S ribosomal RNA. This chain is Small ribosomal subunit protein bS6, found in Chlamydia felis (strain Fe/C-56) (Chlamydophila felis).